The primary structure comprises 211 residues: Protein crossbronx-like (211 aa).

The 161-residue stretch at 17–177 folds into the UBC core domain; it reads NQGYQILAEY…VRNSILWSCK (161 aa).

This sequence belongs to the ubiquitin-conjugating enzyme family. FTS subfamily.

This chain is Protein crossbronx-like, found in Drosophila grimshawi (Hawaiian fruit fly).